A 391-amino-acid chain; its full sequence is Tumor susceptibility gene 101 protein (391 aa).

At alanine 2 the chain carries N-acetylalanine. The region spanning 2-145 is the UEV domain; it reads AVSESQLKKM…GEEPPVFSRP (144 aa). Residues 159-163 form an interaction with CEP55 region; it reads PPNTS. Positions 195–222 are disordered; sequence GPYPATTSSQYPSQPPVTTAGPSRDGTI. Residues 200-215 are compositionally biased toward polar residues; sequence TTSSQYPSQPPVTTAG. Threonine 221 carries the phosphothreonine modification. Residues 238–317 are a coiled coil; that stretch reads KLRWRMKEEM…NQSENNDIDE (80 aa). Residues 321-324 carry the PTAP motif motif; sequence PTAP. An SB domain is found at 323-391; the sequence is APLYKQILNL…RKTAGLSDLY (69 aa).

This sequence belongs to the ubiquitin-conjugating enzyme family. UEV subfamily. Component of the ESCRT-I complex (endosomal sorting complex required for transport I) which consists of TSG101, VPS28, a VPS37 protein (VPS37A to -D) and MVB12A or MVB12B in a 1:1:1:1 stoichiometry. Interacts with VPS37A, VPS37B and VPS37C. Interacts with DMAP1. Interacts with ubiquitin. Interacts with AATF. Interacts with stathmin and GMCL. Component of an ESCRT-I complex (endosomal sorting complex required for transport I) which consists of TSG101, VPS28, VPS37A and UBAP1 in a 1:1:1:1 stoichiometry. Interacts with HGS; the interaction mediates the association with the ESCRT-0 complex. Interacts with GGA1 and GGA3. Interacts (via UEV domain) with PDCD6IP/AIP1. Interacts with VPS28, SNF8 and VPS36. Self-associates. Interacts with MVB12A; the association appears to be mediated by the TSG101-VPS37 binary subcomplex. Interacts with VPS37D. Interacts with LRSAM1. Interacts with CEP55; the interaction is required for cytokinesis. Interacts with PDCD6. Interacts with LITAF. Interacts with MGRN1. Interacts with ARRDC1; recruits TSG101 to the plasma membrane. In terms of processing, monoubiquitinated at multiple sites by LRSAM1 and by MGRN1. Ubiquitination inactivates it, possibly by regulating its shuttling between an active membrane-bound protein and an inactive soluble form. Ubiquitination by MGRN1 requires the presence of UBE2D1.

The protein localises to the cytoplasm. Its subcellular location is the early endosome membrane. The protein resides in the late endosome membrane. It is found in the cytoskeleton. It localises to the microtubule organizing center. The protein localises to the centrosome. Its subcellular location is the midbody. The protein resides in the midbody ring. It is found in the nucleus. Functionally, component of the ESCRT-I complex, a regulator of vesicular trafficking process. Binds to ubiquitinated cargo proteins and is required for the sorting of endocytic ubiquitinated cargos into multivesicular bodies (MVBs). Mediates the association between the ESCRT-0 and ESCRT-I complex. Required for completion of cytokinesis; the function requires CEP55. May be involved in cell growth and differentiation. Acts as a negative growth regulator. Required for the exosomal release of SDCBP, CD63 and syndecan. It may also play a role in the extracellular release of microvesicles that differ from the exosomes. This Rattus norvegicus (Rat) protein is Tumor susceptibility gene 101 protein (Tsg101).